The primary structure comprises 91 residues: Ice-structuring protein 2A7 (91 aa).

The N-terminal stretch at 1–21 (MALSLFTVGQLIFLFWTMRIT) is a signal peptide. The propeptide at 22–39 (EANPDPAAKAVPAAAAPD) is removed by a dipeptidylpeptidase.

This sequence belongs to the type-I AFP family. Detected in blood serum (at protein level).

The protein resides in the secreted. In terms of biological role, contributes to protect fish blood from freezing at subzero sea water temperatures. Lowers the blood freezing point. Binds to nascent ice crystals and prevents further growth. This is Ice-structuring protein 2A7 from Pseudopleuronectes americanus (Winter flounder).